Here is a 424-residue protein sequence, read N- to C-terminus: Double homeobox protein 4-like protein 2 (424 aa).

Residues 1–10 are compositionally biased toward polar residues; that stretch reads MALPTPSDST. 5 disordered regions span residues 1–24, 72–102, 148–167, 218–362, and 388–414; these read MALPTPSDSTLPAEARGRGRRRRL, SRQLRQHRRESRPWPGRRGPPEGRRKRTAVT, RHPGQGGRAPAQAGGLCSAA, LQPS…LQEP, and QPLLETEAPGELEASEEAASLEAPLSE. 2 consecutive DNA-binding regions (homeobox) follow at residues 19-78 and 94-153; these read GRRR…LRQH and GRRK…PGQG. The span at 265 to 274 shows a compositional bias: basic and acidic residues; sequence KSREDRDPQR. Low complexity-rich tracts occupy residues 278–302 and 319–329; these read PGPCAVAQPGPAQAGPQGQGVLAPP and AGAAWEPQAGA.

The protein localises to the nucleus. In terms of biological role, may be involved in transcriptional regulation. The sequence is that of Double homeobox protein 4-like protein 2 (DUX4L2) from Homo sapiens (Human).